The sequence spans 1077 residues: Error-prone DNA polymerase (1077 aa).

It belongs to the DNA polymerase type-C family. DnaE2 subfamily.

It is found in the cytoplasm. The catalysed reaction is DNA(n) + a 2'-deoxyribonucleoside 5'-triphosphate = DNA(n+1) + diphosphate. DNA polymerase involved in damage-induced mutagenesis and translesion synthesis (TLS). It is not the major replicative DNA polymerase. In Brucella suis biovar 1 (strain 1330), this protein is Error-prone DNA polymerase.